The sequence spans 396 residues: Elongation factor Tu (396 aa).

The region spanning 10-206 is the tr-type G domain; the sequence is KPHCNIGTIG…AVDSYIPQPE (197 aa). The interval 19-26 is G1; the sequence is GHVDHGKT. A GTP-binding site is contributed by 19–26; that stretch reads GHVDHGKT. Mg(2+) is bound at residue Thr-26. The interval 60 to 64 is G2; it reads GITIS. The segment at 81–84 is G3; the sequence is DCPG. GTP is bound by residues 81–85 and 136–139; these read DCPGH and NKVD. The interval 136–139 is G4; sequence NKVD. A G5 region spans residues 174–176; the sequence is SAV.

Belongs to the TRAFAC class translation factor GTPase superfamily. Classic translation factor GTPase family. EF-Tu/EF-1A subfamily. As to quaternary structure, monomer.

It is found in the cytoplasm. The enzyme catalyses GTP + H2O = GDP + phosphate + H(+). In terms of biological role, GTP hydrolase that promotes the GTP-dependent binding of aminoacyl-tRNA to the A-site of ribosomes during protein biosynthesis. This Rhizorhabdus wittichii (strain DSM 6014 / CCUG 31198 / JCM 15750 / NBRC 105917 / EY 4224 / RW1) (Sphingomonas wittichii) protein is Elongation factor Tu.